Reading from the N-terminus, the 556-residue chain is Potassium-transporting ATPase potassium-binding subunit (556 aa).

10 consecutive transmembrane segments (helical) span residues 6-26, 65-85, 133-153, 176-196, 249-269, 283-303, 378-398, 419-439, 483-503, and 526-546; these read AGIL…VPLG, SVLA…LLQG, GLSV…MAFV, LRIL…GGVI, PTTW…FSLP, AAIL…MMLF, GLYS…LMVG, YFLV…ALPG, ALGL…LALA, and FVGM…LPVL.

This sequence belongs to the KdpA family. As to quaternary structure, the system is composed of three essential subunits: KdpA, KdpB and KdpC.

The protein localises to the cell membrane. Functionally, part of the high-affinity ATP-driven potassium transport (or Kdp) system, which catalyzes the hydrolysis of ATP coupled with the electrogenic transport of potassium into the cytoplasm. This subunit binds the extracellular potassium ions and delivers the ions to the membrane domain of KdpB through an intramembrane tunnel. The chain is Potassium-transporting ATPase potassium-binding subunit from Mycobacterium sp. (strain KMS).